A 430-amino-acid polypeptide reads, in one-letter code: Gamma-glutamyl phosphate reductase (430 aa).

It belongs to the gamma-glutamyl phosphate reductase family.

It is found in the cytoplasm. The catalysed reaction is L-glutamate 5-semialdehyde + phosphate + NADP(+) = L-glutamyl 5-phosphate + NADPH + H(+). The protein operates within amino-acid biosynthesis; L-proline biosynthesis; L-glutamate 5-semialdehyde from L-glutamate: step 2/2. Its function is as follows. Catalyzes the NADPH-dependent reduction of L-glutamate 5-phosphate into L-glutamate 5-semialdehyde and phosphate. The product spontaneously undergoes cyclization to form 1-pyrroline-5-carboxylate. This is Gamma-glutamyl phosphate reductase from Methylococcus capsulatus (strain ATCC 33009 / NCIMB 11132 / Bath).